We begin with the raw amino-acid sequence, 557 residues long: QTCSTSDDADDPTPPNERDDEAFASRVAAAKRELEGTGTVCQINNGETDLAAKFHKSLPHDDLGQVDADAFAALEDCILNGDLSICEDVPVGNSEGDPVGRLVNPTAAFAIDISGPAFSATTIPPVPTLPSPELAAQLAEVYWMALARDVPFMQYGTDDITVTAAANLAGMEGFPNLDAVSIGSDGTVDPLSQLFRATFVGVETGPFISQLLVNSFTIDSITVEPKQETFAPDVNYMVDFDEWLNIQNGGPPAGPELLDDELRFVRNARDLARVTFTDNINTEAYRGALILLGLDAFNRAGVNGPFIDIDRQAGFVNFGISHYFRLIGAAELAQRSSWYQKWQVHRFARPEALGGTLHLTIKGELNADFDLSLLENAELLKRVAAINAAQNPNNEVTYLLPQAIQEGSPTHPSYPSGHATQNGAFATVLKALIGLDRGGDCYPDPVYPDDDGLKLIDFRGSCLTFEGEINKLAVNVAFGRQMLGIHYRFDGIQGLLLGETITVRTLHQELMTFAEESTFEFRLFTGEVIKLFQDGTFTIDGFKCPGLVYTGVENCVS.

At Gln1 the chain carries Pyrrolidone carboxylic acid. The interval 1 to 22 (QTCSTSDDADDPTPPNERDDEA) is disordered. Cysteines 77 and 86 form a disulfide. The vanadate site is built by Lys341 and Arg349. His411 is an active-site residue. Vanadate contacts are provided by Ser416, Gly417, and His418. Residue His418 is part of the active site. Cysteines 441 and 462 form a disulfide. Vanadate-binding residues include Arg480 and His486. A disulfide bridge links Cys544 with Cys555.

This sequence belongs to the vanadium-dependent haloperoxidase family. Homodimer; disulfide-linked. Vanadate is required as a cofactor.

The enzyme catalyses RH + Br(-) + H2O2 = RBr + 2 H2O.. Catalyzes the halogenation of organic substrates in the presence of hydrogen peroxide. The polypeptide is Vanadium-dependent bromoperoxidase (Ascophyllum nodosum (Knotted wrack)).